The sequence spans 267 residues: Carboxy-S-adenosyl-L-methionine synthase (267 aa).

Residues 1 to 11 (MPNRDTQSQND) are compositionally biased toward polar residues. Positions 1-25 (MPNRDTQSQNDTPRHSPEAAEPQRD) are disordered. A compositionally biased stretch (basic and acidic residues) spans 12 to 24 (TPRHSPEAAEPQR). S-adenosyl-L-methionine-binding positions include tyrosine 59, 84–86 (GCS), 109–110 (DN), 137–138 (DI), asparagine 152, and arginine 219.

It belongs to the class I-like SAM-binding methyltransferase superfamily. Cx-SAM synthase family. In terms of assembly, homodimer.

It carries out the reaction prephenate + S-adenosyl-L-methionine = carboxy-S-adenosyl-L-methionine + 3-phenylpyruvate + H2O. In terms of biological role, catalyzes the conversion of S-adenosyl-L-methionine (SAM) to carboxy-S-adenosyl-L-methionine (Cx-SAM). The sequence is that of Carboxy-S-adenosyl-L-methionine synthase from Yersinia pseudotuberculosis serotype O:1b (strain IP 31758).